A 132-amino-acid polypeptide reads, in one-letter code: Small ribosomal subunit protein uS8 (132 aa).

The protein belongs to the universal ribosomal protein uS8 family. As to quaternary structure, part of the 30S ribosomal subunit. Contacts proteins S5 and S12.

Functionally, one of the primary rRNA binding proteins, it binds directly to 16S rRNA central domain where it helps coordinate assembly of the platform of the 30S subunit. This is Small ribosomal subunit protein uS8 from Streptococcus agalactiae serotype V (strain ATCC BAA-611 / 2603 V/R).